The chain runs to 438 residues: Xylose isomerase (438 aa).

Active-site residues include His102 and Asp105. Positions 233, 269, 272, 297, 308, 310, and 340 each coordinate Mg(2+).

Belongs to the xylose isomerase family. In terms of assembly, homotetramer. It depends on Mg(2+) as a cofactor.

The protein localises to the cytoplasm. The catalysed reaction is alpha-D-xylose = alpha-D-xylulofuranose. The sequence is that of Xylose isomerase from Solibacter usitatus (strain Ellin6076).